Consider the following 359-residue polypeptide: UPF0283 membrane protein Atu1356 (359 aa).

Positions 1–39 are disordered; that stretch reads MKAPTQNDPQTRRPAAFTLETEEAARPSATQKRAPRSFD. The next 2 membrane-spanning stretches (helical) occupy residues 75 to 95 and 108 to 128; these read FGKLGLGALGVLFSLAFGLWA and WLGYTATIALIVALFAVLALV.

This sequence belongs to the UPF0283 family.

The protein localises to the cell inner membrane. The polypeptide is UPF0283 membrane protein Atu1356 (Agrobacterium fabrum (strain C58 / ATCC 33970) (Agrobacterium tumefaciens (strain C58))).